Reading from the N-terminus, the 313-residue chain is Probable lysophospholipase L2 (313 aa).

It localises to the cell inner membrane. The enzyme catalyses a 1-acyl-sn-glycero-3-phosphocholine + H2O = sn-glycerol 3-phosphocholine + a fatty acid + H(+). The polypeptide is Probable lysophospholipase L2 (pldB) (Haemophilus influenzae (strain ATCC 51907 / DSM 11121 / KW20 / Rd)).